A 205-amino-acid polypeptide reads, in one-letter code: Large ribosomal subunit protein uL4 (205 aa).

The segment at 48–79 (KAQKSRSDVSGGGKKPWKQKGSGHARAGTTRS) is disordered.

The protein belongs to the universal ribosomal protein uL4 family. As to quaternary structure, part of the 50S ribosomal subunit.

In terms of biological role, one of the primary rRNA binding proteins, this protein initially binds near the 5'-end of the 23S rRNA. It is important during the early stages of 50S assembly. It makes multiple contacts with different domains of the 23S rRNA in the assembled 50S subunit and ribosome. Functionally, forms part of the polypeptide exit tunnel. The sequence is that of Large ribosomal subunit protein uL4 from Methylococcus capsulatus (strain ATCC 33009 / NCIMB 11132 / Bath).